A 156-amino-acid chain; its full sequence is ATP synthase subunit b (156 aa).

A helical membrane pass occupies residues 7–27 (LIGQTVAFIIFVWFCMKFVWP).

It belongs to the ATPase B chain family. As to quaternary structure, F-type ATPases have 2 components, F(1) - the catalytic core - and F(0) - the membrane proton channel. F(1) has five subunits: alpha(3), beta(3), gamma(1), delta(1), epsilon(1). F(0) has three main subunits: a(1), b(2) and c(10-14). The alpha and beta chains form an alternating ring which encloses part of the gamma chain. F(1) is attached to F(0) by a central stalk formed by the gamma and epsilon chains, while a peripheral stalk is formed by the delta and b chains.

The protein localises to the cell inner membrane. F(1)F(0) ATP synthase produces ATP from ADP in the presence of a proton or sodium gradient. F-type ATPases consist of two structural domains, F(1) containing the extramembraneous catalytic core and F(0) containing the membrane proton channel, linked together by a central stalk and a peripheral stalk. During catalysis, ATP synthesis in the catalytic domain of F(1) is coupled via a rotary mechanism of the central stalk subunits to proton translocation. Its function is as follows. Component of the F(0) channel, it forms part of the peripheral stalk, linking F(1) to F(0). The chain is ATP synthase subunit b from Shewanella baltica (strain OS155 / ATCC BAA-1091).